Here is a 220-residue protein sequence, read N- to C-terminus: Deoxyribose-phosphate aldolase (220 aa).

Asp92 functions as the Proton donor/acceptor in the catalytic mechanism. Lys157 serves as the catalytic Schiff-base intermediate with acetaldehyde. Catalysis depends on Lys186, which acts as the Proton donor/acceptor.

Belongs to the DeoC/FbaB aldolase family. DeoC type 1 subfamily.

It localises to the cytoplasm. It carries out the reaction 2-deoxy-D-ribose 5-phosphate = D-glyceraldehyde 3-phosphate + acetaldehyde. Its pathway is carbohydrate degradation; 2-deoxy-D-ribose 1-phosphate degradation; D-glyceraldehyde 3-phosphate and acetaldehyde from 2-deoxy-alpha-D-ribose 1-phosphate: step 2/2. Catalyzes a reversible aldol reaction between acetaldehyde and D-glyceraldehyde 3-phosphate to generate 2-deoxy-D-ribose 5-phosphate. This Caldicellulosiruptor saccharolyticus (strain ATCC 43494 / DSM 8903 / Tp8T 6331) protein is Deoxyribose-phosphate aldolase.